Reading from the N-terminus, the 172-residue chain is Ribosome maturation factor RimM (172 aa).

Residues 97 to 170 (ENEFYFHEII…KITIEVMEGL (74 aa)) enclose the PRC barrel domain.

This sequence belongs to the RimM family. Binds ribosomal protein uS19.

It is found in the cytoplasm. Its function is as follows. An accessory protein needed during the final step in the assembly of 30S ribosomal subunit, possibly for assembly of the head region. Essential for efficient processing of 16S rRNA. May be needed both before and after RbfA during the maturation of 16S rRNA. It has affinity for free ribosomal 30S subunits but not for 70S ribosomes. This chain is Ribosome maturation factor RimM, found in Listeria monocytogenes serovar 1/2a (strain ATCC BAA-679 / EGD-e).